A 204-amino-acid chain; its full sequence is Guanylate kinase (204 aa).

Residues 5-184 enclose the Guanylate kinase-like domain; sequence GLLLVLSGPS…AVNHIKAIVD (180 aa). 12-19 serves as a coordination point for ATP; sequence GPSGVGKG.

This sequence belongs to the guanylate kinase family.

Its subcellular location is the cytoplasm. It carries out the reaction GMP + ATP = GDP + ADP. Functionally, essential for recycling GMP and indirectly, cGMP. The protein is Guanylate kinase of Lactobacillus delbrueckii subsp. bulgaricus (strain ATCC 11842 / DSM 20081 / BCRC 10696 / JCM 1002 / NBRC 13953 / NCIMB 11778 / NCTC 12712 / WDCM 00102 / Lb 14).